The following is a 148-amino-acid chain: Lipoprotein MlpH (148 aa).

An N-terminal signal peptide occupies residues 1 to 17 (MKIINILFCLFLLMLNG). A lipid anchor (N-palmitoyl cysteine) is attached at Cys18. Residue Cys18 is the site of S-diacylglycerol cysteine attachment. Residues 26–61 (LKNNAQQTKSRRKRDLTQKEVTQEKPKSKEELLREK) form a disordered region. Residues 40-61 (DLTQKEVTQEKPKSKEELLREK) show a composition bias toward basic and acidic residues.

Belongs to the Multicopy lipoprotein (Mlp) family.

Its subcellular location is the cell outer membrane. An outer membrane protein that may participate in pathogenesis. Some human Lyme disease patients have antibodies against this protein. The Mlp proteins probably undergo intragenic recombination, generating new alleles. The chain is Lipoprotein MlpH from Borreliella burgdorferi (strain ATCC 35210 / DSM 4680 / CIP 102532 / B31) (Borrelia burgdorferi).